The following is a 288-amino-acid chain: Orotidine 5'-phosphate decarboxylase (288 aa).

Lys99 (proton donor) is an active-site residue.

It belongs to the OMP decarboxylase family. Type 2 subfamily.

The catalysed reaction is orotidine 5'-phosphate + H(+) = UMP + CO2. Its pathway is pyrimidine metabolism; UMP biosynthesis via de novo pathway; UMP from orotate: step 2/2. This chain is Orotidine 5'-phosphate decarboxylase (pyrF), found in Myxococcus xanthus (strain DK1622).